The sequence spans 607 residues: NAD-dependent protein deacetylase sir-2.1 (607 aa).

Residues 1–68 (MSRDSGNDSE…SVSSESWQNN (68 aa)) form a disordered region. Residues 55-64 (ESTTSVSSES) show a composition bias toward low complexity. Positions 128-401 (KLTNYNSLAD…DSIMEQQGKT (274 aa)) constitute a Deacetylase sirtuin-type domain. NAD(+) contacts are provided by residues 153 to 172 (GAGVSVSCGIPDFRSKDGIY) and 237 to 240 (QNID). The active-site Proton acceptor is histidine 255. 4 residues coordinate Zn(2+): cysteine 263, cysteine 266, cysteine 287, and cysteine 290. NAD(+) contacts are provided by residues 327–329 (GSS), 352–354 (NRE), and cysteine 369. A disordered region spans residues 426 to 453 (EKRNDDSSDEPTLKKPRMSVADDSMDSE).

It belongs to the sirtuin family. Class I subfamily. In terms of assembly, interacts with ftt-2 and par-5. Interacts with daf-16 following heat-shock, which causes daf-16 to accumulate in the nucleus. Interaction with daf-16 is promoted by ftt-2. Interacts with transcriptional coregulator hcf-1. Zn(2+) is required as a cofactor.

It is found in the nucleus. The protein localises to the cytoplasm. The enzyme catalyses N(6)-acetyl-L-lysyl-[protein] + NAD(+) + H2O = 2''-O-acetyl-ADP-D-ribose + nicotinamide + L-lysyl-[protein]. Functionally, NAD-dependent deacetylase. Involved in metabolism, apoptosis, response to oxidative stress, response to DNA damage, and determination of lifespan. Required for a reduction of the 'Lys-16' acetylation of histone H4 (H4K16ac) on dosage-compensated X chromosomes in hermaphrodites. Plays a role in germ cell and somatic cell apoptosis in response to DNA damage. Functions upstream of daf-16/Forkhead box protein O in the Insulin/IGF-1-like signaling (IIS) mediated pathway, promoting daf-16 mediated transcriptional activation and increased lifespan. May also regulate lifespan independently of daf-16 by modulating the transcription of genes involved in the stress response of the endoplasmic reticulum (ER). Functions upstream of transcriptional coregulator hcf-1, perhaps acting independently of the IIS mediated pathway, to modulate lifespan and oxidative stress response. Acts upstream of the nicotinic acid metabolism pathway, which may be linked to the regulation of longevity. Plays a role in ascaroside-mediated longevity and stress resistance. This is NAD-dependent protein deacetylase sir-2.1 from Caenorhabditis elegans.